Consider the following 121-residue polypeptide: Cytochrome c2 iso-2 (121 aa).

The heme c site is built by Cys-15, Cys-18, His-19, and Met-98.

It belongs to the cytochrome c family. Post-translationally, binds 1 heme c group covalently per subunit.

Its function is as follows. Cytochrome c2 is found mainly in purple, non-sulfur, photosynthetic bacteria where it functions as the electron donor to the oxidized bacteriochlorophyll in the photophosphorylation pathway. However, it may also have a role in the respiratory chain and is found in some non-photosynthetic bacteria. This Rhodospirillum centenum (Rhodocista centenaria) protein is Cytochrome c2 iso-2.